The chain runs to 508 residues: UBX domain-containing protein 4 (508 aa).

Residues 1-200 are interaction with UBQLN1; the sequence is MLWFQGAIPA…PAEDLNIRVE (200 aa). Residues 1–413 are Cytoplasmic-facing; it reads MLWFQGAIPA…VHSSSGDIWT (413 aa). 2 stretches are compositionally biased toward polar residues: residues 117-151 and 160-187; these read SETSVANGSQSESSVSTPSASFEPNNTCENSQSRN and TSDTKSDTATGGESAGHATSSQEPSGCS. Residues 117–196 are disordered; sequence SETSVANGSQ…SDQRPAEDLN (80 aa). Residues 315 to 393 form the UBX domain; that stretch reads ERSTVARIQF…ELAPSASVVL (79 aa). Residues 414–434 lie within the membrane without spanning it; the sequence is LLGTVLYPFLAIWRLISNFLF. Over 435 to 508 the chain is Cytoplasmic; that stretch reads SNPPPTQTSV…TWNGNSTQQM (74 aa). Residues 440 to 508 are disordered; it reads TQTSVRVTSS…TWNGNSTQQM (69 aa). Polar residues predominate over residues 441–458; the sequence is QTSVRVTSSEPPNPASSS. Basic and acidic residues predominate over residues 459 to 491; the sequence is KSEKREPVRKRVLEKRGDDFKKEGKIYRLRTQD. Threonine 489 bears the Phosphothreonine mark. A compositionally biased stretch (polar residues) spans 498–508; that stretch reads NTWNGNSTQQM.

As to quaternary structure, directly interacts with VCP. Interacts with UBQLN1. Forms a complex with VCP and UBQLN1. Expressed in many tissues, including heart, brain, placenta, lung, liver, skeletal muscle, kidney and pancreas. Accumulates in Alzheimer disease-afflicted brains (at protein level).

Its subcellular location is the endoplasmic reticulum membrane. It is found in the nucleus envelope. In terms of biological role, involved in endoplasmic reticulum-associated protein degradation (ERAD). Acts as a platform to recruit both UBQLN1 and VCP to the ER during ERAD. This Homo sapiens (Human) protein is UBX domain-containing protein 4 (UBXN4).